Here is a 196-residue protein sequence, read N- to C-terminus: Crossover junction endodeoxyribonuclease RuvC (196 aa).

Catalysis depends on residues Asp23, Glu83, and His156. Residues Asp23, Glu83, and His156 each contribute to the Mg(2+) site.

The protein belongs to the RuvC family. As to quaternary structure, homodimer which binds Holliday junction (HJ) DNA. The HJ becomes 2-fold symmetrical on binding to RuvC with unstacked arms; it has a different conformation from HJ DNA in complex with RuvA. In the full resolvosome a probable DNA-RuvA(4)-RuvB(12)-RuvC(2) complex forms which resolves the HJ. Mg(2+) serves as cofactor.

The protein resides in the cytoplasm. The enzyme catalyses Endonucleolytic cleavage at a junction such as a reciprocal single-stranded crossover between two homologous DNA duplexes (Holliday junction).. The RuvA-RuvB-RuvC complex processes Holliday junction (HJ) DNA during genetic recombination and DNA repair. Endonuclease that resolves HJ intermediates. Cleaves cruciform DNA by making single-stranded nicks across the HJ at symmetrical positions within the homologous arms, yielding a 5'-phosphate and a 3'-hydroxyl group; requires a central core of homology in the junction. The consensus cleavage sequence is 5'-(A/T)TT(C/G)-3'. Cleavage occurs on the 3'-side of the TT dinucleotide at the point of strand exchange. HJ branch migration catalyzed by RuvA-RuvB allows RuvC to scan DNA until it finds its consensus sequence, where it cleaves and resolves the cruciform DNA. This is Crossover junction endodeoxyribonuclease RuvC from Treponema pallidum (strain Nichols).